Reading from the N-terminus, the 389-residue chain is Chalcone synthase 1 (389 aa).

Cysteine 164 is a catalytic residue.

This sequence belongs to the thiolase-like superfamily. Chalcone/stilbene synthases family.

The enzyme catalyses (E)-4-coumaroyl-CoA + 3 malonyl-CoA + 3 H(+) = 2',4,4',6'-tetrahydroxychalcone + 3 CO2 + 4 CoA. It participates in secondary metabolite biosynthesis; flavonoid biosynthesis. Functionally, the primary product of this enzyme is 4,2',4',6'-tetrahydroxychalcone (also termed naringenin-chalcone or chalcone) which can under specific conditions spontaneously isomerize into naringenin. The chain is Chalcone synthase 1 (CHS1) from Pisum sativum (Garden pea).